We begin with the raw amino-acid sequence, 90 residues long: Probable Fe(2+)-trafficking protein (90 aa).

The protein belongs to the Fe(2+)-trafficking protein family.

Could be a mediator in iron transactions between iron acquisition and iron-requiring processes, such as synthesis and/or repair of Fe-S clusters in biosynthetic enzymes. In Pseudomonas entomophila (strain L48), this protein is Probable Fe(2+)-trafficking protein.